Reading from the N-terminus, the 279-residue chain is NH(3)-dependent NAD(+) synthetase (279 aa).

46 to 53 (GVSGGQDS) provides a ligand contact to ATP. D52 contacts Mg(2+). R139 contacts deamido-NAD(+). T159 contributes to the ATP binding site. E164 serves as a coordination point for Mg(2+). Residues K172 and D179 each coordinate deamido-NAD(+). The ATP site is built by K188 and T210. A deamido-NAD(+)-binding site is contributed by 259–260 (HK).

The protein belongs to the NAD synthetase family. In terms of assembly, homodimer.

It carries out the reaction deamido-NAD(+) + NH4(+) + ATP = AMP + diphosphate + NAD(+) + H(+). It functions in the pathway cofactor biosynthesis; NAD(+) biosynthesis; NAD(+) from deamido-NAD(+) (ammonia route): step 1/1. In terms of biological role, catalyzes the ATP-dependent amidation of deamido-NAD to form NAD. Uses ammonia as a nitrogen source. This is NH(3)-dependent NAD(+) synthetase from Leifsonia xyli subsp. xyli (strain CTCB07).